The following is a 465-amino-acid chain: ATP synthase subunit beta (465 aa).

152–159 (GGAGVGKT) is an ATP binding site.

Belongs to the ATPase alpha/beta chains family. As to quaternary structure, F-type ATPases have 2 components, CF(1) - the catalytic core - and CF(0) - the membrane proton channel. CF(1) has five subunits: alpha(3), beta(3), gamma(1), delta(1), epsilon(1). CF(0) has three main subunits: a(1), b(2) and c(9-12). The alpha and beta chains form an alternating ring which encloses part of the gamma chain. CF(1) is attached to CF(0) by a central stalk formed by the gamma and epsilon chains, while a peripheral stalk is formed by the delta and b chains.

It localises to the cell inner membrane. It catalyses the reaction ATP + H2O + 4 H(+)(in) = ADP + phosphate + 5 H(+)(out). Its function is as follows. Produces ATP from ADP in the presence of a proton gradient across the membrane. The catalytic sites are hosted primarily by the beta subunits. This is ATP synthase subunit beta from Campylobacter fetus subsp. fetus (strain 82-40).